We begin with the raw amino-acid sequence, 772 residues long: Glucocorticoid receptor (772 aa).

The segment covering 1–15 has biased composition (basic and acidic residues); sequence MDSKESLSPPGREEV. Positions 1–22 are disordered; that stretch reads MDSKESLSPPGREEVPSSVLRP. Positions 1–415 are modulating; sequence MDSKESLSPP…TTAAGPPPKL (415 aa). Residue arginine 25 is modified to Omega-N-methylarginine. Positions 39–82 are disordered; sequence APVRVPASSPSLAPAAQPDSKQQRLAVDFPKGSASNAQQPDLSR. Residues 44–58 show a composition bias toward low complexity; the sequence is PASSPSLAPAAQPDS. Serine 47, serine 115, serine 136, and serine 143 each carry phosphoserine. A disordered region spans residues 132 to 186; sequence NRSASGADNPRSTAPAAGSAAPTEGFPKTHSDLASERQNPKGQTGGSAGSAKLHP. A compositionally biased stretch (low complexity) spans 143–156; that stretch reads STAPAAGSAAPTEG. Residues 158–170 are compositionally biased toward basic and acidic residues; sequence PKTHSDLASERQN. Residues serine 203, serine 211, and serine 226 each carry the phosphoserine modification. Lysine 258 participates in a covalent cross-link: Glycyl lysine isopeptide (Lys-Gly) (interchain with G-Cter in SUMO2). Residues lysine 277 and lysine 293 each participate in a glycyl lysine isopeptide (Lys-Gly) (interchain with G-Cter in SUMO); alternate cross-link. Glycyl lysine isopeptide (Lys-Gly) (interchain with G-Cter in SUMO2); alternate cross-links involve residues lysine 277 and lysine 293. Serine 307 and serine 400 each carry phosphoserine. A Glycyl lysine isopeptide (Lys-Gly) (interchain with G-Cter in ubiquitin) cross-link involves residue lysine 414. 2 consecutive NR C4-type zinc fingers follow at residues 416–436 and 452–476; these read CLVCSDEASGCHYGVLTCGSC and CAGRNDCIIDKIRRKNCPACRYRKC. A DNA-binding region (nuclear receptor) is located at residues 416-481; it reads CLVCSDEASG…RYRKCLQAGM (66 aa). An N6-acetyllysine mark is found at lysine 475, lysine 487, lysine 489, and lysine 490. An interaction with CLOCK region spans residues 480–772; the sequence is GMNLEARKTK…NIKKLLFHQK (293 aa). The interval 482–518 is hinge; it reads NLEARKTKKKIKGIQQTSTGVSQETSENPSNRTVVPA. Positions 494-513 are disordered; that stretch reads GIQQTSTGVSQETSENPSNR. Over residues 499–513 the composition is skewed to polar residues; the sequence is STGVSQETSENPSNR. Residues 519–753 form the NR LBD domain; sequence ALPQLTPTLV…FPEMLAEIIT (235 aa). Residues 527–692 form an interaction with CRY1 region; that stretch reads LVSLLEVIEP…EIRMTYIKEL (166 aa). Lysine 698 is covalently cross-linked (Glycyl lysine isopeptide (Lys-Gly) (interchain with G-Cter in SUMO)).

The protein belongs to the nuclear hormone receptor family. NR3 subfamily. Heteromultimeric cytoplasmic complex with HSP90AA1, HSPA1A/HSPA1B, and FKBP5 or another immunophilin such as PPID, STIP1, or the immunophilin homolog PPP5C. Upon ligand binding FKBP5 dissociates from the complex and FKBP4 takes its place, thereby linking the complex to dynein and mediating transport to the nucleus, where the complex dissociates. Probably forms a complex composed of chaperones HSP90 and HSP70, co-chaperones CDC37, PPP5C, TSC1 and client protein TSC2, CDK4, AKT, RAF1 and NR3C1; this complex does not contain co-chaperones STIP1/HOP and PTGES3/p23. Directly interacts with UNC45A. Binds to DNA as a homodimer, and as heterodimer with NR3C2 or the retinoid X receptor. Binds STAT5A and STAT5B homodimers and heterodimers. Interacts with NRIP1, POU2F1, POU2F2 and TRIM28. Interacts with several coactivator complexes, including the SMARCA4 complex, CREBBP/EP300, TADA2L (Ada complex) and p160 coactivators such as NCOA2 and NCOA6. Interaction with BAG1 inhibits transactivation. Interacts with HEXIM1 and TGFB1I1. Interacts with NCOA1. Interacts with NCOA3, SMARCA4, SMARCC1, SMARCD1, and SMARCE1. Interacts with CLOCK, CRY1 and CRY2 in a ligand-dependent fashion. Interacts with CIART. Interacts with RWDD3. Interacts with UBE2I/UBC9 and this interaction is enhanced in the presence of RWDD3. Interacts with GRIP1. Interacts with NR4A3 (via nuclear receptor DNA-binding domain), represses transcription activity of NR4A3 on the POMC promoter Nur response element (NurRE). Directly interacts with PNRC2 to attract and form a complex with UPF1 and DCP1A; the interaction leads to rapid mRNA degradation. Interacts with GSK3B. Interacts with FNIP1 and FNIP2. Interacts (via C-terminus) with HNRNPU (via C-terminus). Interacts with MCM3AP. Interacts (via domain NR LBD) with HSP90AA1 and HSP90AB1. In the absence of hormonal ligand, interacts with TACC1. Interacts (via NR LBD domain) with ZNF764 (via KRAB domain); the interaction regulates transcription factor activity of NR3C1 by directing its actions toward certain biologic pathways. Acetylation by CLOCK reduces its binding to glucocorticoid response elements and its transcriptional activity. Post-translationally, increased proteasome-mediated degradation in response to glucocorticoids. In terms of processing, phosphorylated in the absence of hormone; becomes hyperphosphorylated in the presence of glucocorticoid. The Ser-203, Ser-226 and Ser-399-phosphorylated forms are mainly cytoplasmic, and the Ser-211-phosphorylated form is nuclear. Phosphorylation at Ser-211 increases transcriptional activity. Phosphorylation at Ser-203, Ser-226 and Ser-399 decreases signaling capacity. Phosphorylation at Ser-399 may protect from glucocorticoid-induced apoptosis. Phosphorylation at Ser-203 and Ser-211 is not required in regulation of chromosome segregation. May be dephosphorylated by PPP5C, attenuates NR3C1 action. Ubiquitinated by UBR5, leading to its degradation: UBR5 specifically recognizes and binds ligand-bound NR3C1 when it is not associated with coactivators (NCOAs). In presence of NCOAs, the UBR5-degron is not accessible, preventing its ubiquitination and degradation. Post-translationally, sumoylation at Lys-277 and Lys-293 negatively regulates its transcriptional activity. Sumoylation at Lys-698 positively regulates its transcriptional activity in the presence of RWDD3. Sumoylation at Lys-277 and Lys-293 is dispensable whereas sumoylation at Lys-698 is critical for the stimulatory effect of RWDD3 on its transcriptional activity. Heat shock increases sumoylation in a RWDD3-dependent manner.

The protein resides in the cytoplasm. It localises to the nucleus. The protein localises to the mitochondrion. Its subcellular location is the cytoskeleton. It is found in the spindle. The protein resides in the microtubule organizing center. It localises to the centrosome. The protein localises to the chromosome. Its subcellular location is the nucleoplasm. Functionally, receptor for glucocorticoids (GC). Has a dual mode of action: as a transcription factor that binds to glucocorticoid response elements (GRE), both for nuclear and mitochondrial DNA, and as a modulator of other transcription factors. Affects inflammatory responses, cellular proliferation and differentiation in target tissues. Involved in chromatin remodeling. Plays a role in rapid mRNA degradation by binding to the 5' UTR of target mRNAs and interacting with PNRC2 in a ligand-dependent manner which recruits the RNA helicase UPF1 and the mRNA-decapping enzyme DCP1A, leading to RNA decay. Could act as a coactivator for STAT5-dependent transcription upon growth hormone (GH) stimulation and could reveal an essential role of hepatic GR in the control of body growth. Mediates glucocorticoid-induced apoptosis. Promotes accurate chromosome segregation during mitosis. May act as a tumor suppressor. May play a negative role in adipogenesis through the regulation of lipolytic and antilipogenic gene expression. The chain is Glucocorticoid receptor (NR3C1) from Oryctolagus cuniculus (Rabbit).